We begin with the raw amino-acid sequence, 83 residues long: Small ribosomal subunit protein uS17 (83 aa).

The protein belongs to the universal ribosomal protein uS17 family. In terms of assembly, part of the 30S ribosomal subunit.

Functionally, one of the primary rRNA binding proteins, it binds specifically to the 5'-end of 16S ribosomal RNA. The sequence is that of Small ribosomal subunit protein uS17 from Zymomonas mobilis subsp. mobilis (strain ATCC 31821 / ZM4 / CP4).